Reading from the N-terminus, the 143-residue chain is Anti-sigma F factor (143 aa).

The protein belongs to the anti-sigma-factor family.

It catalyses the reaction L-seryl-[protein] + ATP = O-phospho-L-seryl-[protein] + ADP + H(+). It carries out the reaction L-threonyl-[protein] + ATP = O-phospho-L-threonyl-[protein] + ADP + H(+). Binds to sigma F and blocks its ability to form an RNA polymerase holoenzyme (E-sigma F). Phosphorylates SpoIIAA on a serine residue. This phosphorylation may enable SpoIIAA to act as an anti-anti-sigma factor that counteracts SpoIIAB and thus releases sigma F from inhibition. This Clostridium acetobutylicum (strain ATCC 824 / DSM 792 / JCM 1419 / IAM 19013 / LMG 5710 / NBRC 13948 / NRRL B-527 / VKM B-1787 / 2291 / W) protein is Anti-sigma F factor.